Consider the following 383-residue polypeptide: Acetyl-CoA acetyltransferase (383 aa).

The Acyl-thioester intermediate role is filled by C85. CoA is bound by residues C206, S207, I209, and K328. The Proton acceptor role is filled by H332.

This sequence belongs to the thiolase-like superfamily. Thiolase family. In terms of assembly, interacts with HMG-CoA synthase (HMGCS) that catalyzes the second step in the pathway and with a DUF35 protein. The acetoacetyl-CoA thiolase/HMG-CoA synthase complex channels the intermediate via a fused CoA-binding site, which allows for efficient coupling of the endergonic thiolase reaction with the exergonic HMGCS reaction.

It catalyses the reaction 2 acetyl-CoA = acetoacetyl-CoA + CoA. It participates in metabolic intermediate biosynthesis; (R)-mevalonate biosynthesis; (R)-mevalonate from acetyl-CoA: step 1/3. Catalyzes the condensation of two acetyl-coA molecules into acetoacetyl-CoA. Functions in the mevalonate (MVA) pathway leading to isopentenyl diphosphate (IPP), a key precursor for the biosynthesis of isoprenoid compounds that are building blocks of archaeal membrane lipids. The chain is Acetyl-CoA acetyltransferase from Methanothermobacter thermautotrophicus (strain ATCC 29096 / DSM 1053 / JCM 10044 / NBRC 100330 / Delta H) (Methanobacterium thermoautotrophicum).